The sequence spans 492 residues: WD repeat-containing protein JIP5 (492 aa).

WD repeat units follow at residues 127-166, 178-217, 236-274, 276-317, and 365-405; these read RHKG…VVKK, KKND…LSNS, RSAY…ILIS, DQED…LEDQ, and RNHN…VEEN. Acidic residues-rich tracts occupy residues 404–414 and 422–433; these read ENASVESDSDE and DLSDDTSSDDET. A disordered region spans residues 404 to 472; that stretch reads ENASVESDSD…SKSVKKRKIM (69 aa). Over residues 449–462 the composition is skewed to basic and acidic residues; sequence KDLKEDHQEEKESN.

Belongs to the WD repeat WDR55 family. As to quaternary structure, interacts with BRE1, BUD27 and GIS1.

The protein localises to the nucleus. The protein resides in the nucleolus. In Saccharomyces cerevisiae (strain YJM789) (Baker's yeast), this protein is WD repeat-containing protein JIP5 (JIP5).